The sequence spans 161 residues: Cyclic pyranopterin monophosphate synthase (161 aa).

Substrate is bound by residues 75-77 (MCH) and 114-115 (ME). The active site involves aspartate 129.

This sequence belongs to the MoaC family. Homohexamer; trimer of dimers.

The catalysed reaction is (8S)-3',8-cyclo-7,8-dihydroguanosine 5'-triphosphate = cyclic pyranopterin phosphate + diphosphate. It functions in the pathway cofactor biosynthesis; molybdopterin biosynthesis. In terms of biological role, catalyzes the conversion of (8S)-3',8-cyclo-7,8-dihydroguanosine 5'-triphosphate to cyclic pyranopterin monophosphate (cPMP). The protein is Cyclic pyranopterin monophosphate synthase of Staphylococcus carnosus (strain TM300).